The primary structure comprises 331 residues: Acyl-CoA desaturase 1 (331 aa).

Residues 1-46 (MTEVDDGCGGRLRGSVLLEDECDLKQECETPTHSLVQGRDPPVVVV) lie on the Cytoplasmic side of the membrane. The chain crosses the membrane as a helical span at residues 47 to 67 (WRNVVLMSVLHTAAVYGLVLL). Asparagine 49 lines the substrate pocket. Over 68–71 (PSAS) the chain is Lumenal. The chain crosses the membrane as a helical span at residues 72-90 (AYTLLAFCFVSSALGITAG). At 91-189 (AHRLWSHRSY…DRVVMFQRRF (99 aa)) the chain is on the cytoplasmic side. The Fe cation site is built by histidine 92 and histidine 97. The Histidine box-1 signature appears at 92 to 97 (HRLWSH). Residues asparagine 120, arginine 127, and aspartate 128 each coordinate substrate. Histidine 129, histidine 132, and histidine 133 together coordinate Fe cation. The Histidine box-2 motif lies at 129 to 133 (HRVHH). Residue lysine 161 coordinates substrate. A helical transmembrane segment spans residues 190–209 (YKHSVVVMCFLIPAMLPWFL). Topologically, residues 210-213 (WAES) are lumenal. Residues 214 to 235 (LWVGYFVPVLLRYALVLNATWL) form a helical membrane-spanning segment. Residue tryptophan 234 coordinates substrate. The Cytoplasmic segment spans residues 236-331 (VNSAAHMWGN…RTGDGSHRSG (96 aa)). The Fe cation site is built by histidine 241, histidine 270, histidine 273, and histidine 274. The Histidine box-3 signature appears at 270–274 (HNYHH).

It belongs to the fatty acid desaturase type 1 family. Fe(2+) serves as cofactor. In terms of tissue distribution, expression is highest in liver, followed by brain and intestine, and lowest in spleen. Also expressed in heart, gill and muscle.

It localises to the endoplasmic reticulum membrane. The enzyme catalyses octadecanoyl-CoA + 2 Fe(II)-[cytochrome b5] + O2 + 2 H(+) = (9Z)-octadecenoyl-CoA + 2 Fe(III)-[cytochrome b5] + 2 H2O. Stearoyl-CoA desaturase that utilizes O(2) and electrons from reduced cytochrome b5 to introduce the first double bond into saturated fatty acyl-CoA substrates. Catalyzes the insertion of a cis double bond at the delta-9 position into fatty acyl-CoA substrates including palmitoyl-CoA and stearoyl-CoA. Contributes to the biosynthesis of membrane phospholipids, cholesterol esters and triglycerides. The polypeptide is Acyl-CoA desaturase 1 (Tachysurus fulvidraco (Yellow catfish)).